The sequence spans 85 residues: Small ribosomal subunit protein uS17 (85 aa).

It belongs to the universal ribosomal protein uS17 family. As to quaternary structure, part of the 30S ribosomal subunit.

Functionally, one of the primary rRNA binding proteins, it binds specifically to the 5'-end of 16S ribosomal RNA. This is Small ribosomal subunit protein uS17 from Ruminiclostridium cellulolyticum (strain ATCC 35319 / DSM 5812 / JCM 6584 / H10) (Clostridium cellulolyticum).